A 142-amino-acid polypeptide reads, in one-letter code: Putative pre-16S rRNA nuclease (142 aa).

Belongs to the YqgF nuclease family.

The protein resides in the cytoplasm. Its function is as follows. Could be a nuclease involved in processing of the 5'-end of pre-16S rRNA. This chain is Putative pre-16S rRNA nuclease, found in Saccharophagus degradans (strain 2-40 / ATCC 43961 / DSM 17024).